The following is a 362-amino-acid chain: tRNA-specific 2-thiouridylase MnmA 1 (362 aa).

Residues 29-36 (AMSGGVDS) and M55 each bind ATP. C109 acts as the Nucleophile in catalysis. C109 and C201 form a disulfide bridge. G133 serves as a coordination point for ATP. Residues 151-153 (KDQ) form an interaction with tRNA region. Residue C201 is the Cysteine persulfide intermediate of the active site.

This sequence belongs to the MnmA/TRMU family.

It localises to the cytoplasm. The enzyme catalyses S-sulfanyl-L-cysteinyl-[protein] + uridine(34) in tRNA + AH2 + ATP = 2-thiouridine(34) in tRNA + L-cysteinyl-[protein] + A + AMP + diphosphate + H(+). Functionally, catalyzes the 2-thiolation of uridine at the wobble position (U34) of tRNA, leading to the formation of s(2)U34. The polypeptide is tRNA-specific 2-thiouridylase MnmA 1 (Fusobacterium nucleatum subsp. nucleatum (strain ATCC 25586 / DSM 15643 / BCRC 10681 / CIP 101130 / JCM 8532 / KCTC 2640 / LMG 13131 / VPI 4355)).